The chain runs to 318 residues: HPr kinase/phosphorylase (318 aa).

Residues His143 and Lys164 contribute to the active site. 158-165 (GKSGVGKS) serves as a coordination point for ATP. Ser165 is a binding site for Mg(2+). Asp182 serves as the catalytic Proton acceptor; for phosphorylation activity. Proton donor; for dephosphorylation activity. Residues 206 to 215 (MEIRGLGILN) form an important for the catalytic mechanism of both phosphorylation and dephosphorylation region. Glu207 is a binding site for Mg(2+). The active site involves Arg248. Positions 269-274 (PVKPGR) are important for the catalytic mechanism of dephosphorylation.

Belongs to the HPrK/P family. Homohexamer. Mg(2+) is required as a cofactor.

The catalysed reaction is [HPr protein]-L-serine + ATP = [HPr protein]-O-phospho-L-serine + ADP + H(+). The enzyme catalyses [HPr protein]-O-phospho-L-serine + phosphate + H(+) = [HPr protein]-L-serine + diphosphate. Functionally, catalyzes the ATP- as well as the pyrophosphate-dependent phosphorylation of a specific serine residue in HPr, a phosphocarrier protein of the phosphoenolpyruvate-dependent sugar phosphotransferase system (PTS). HprK/P also catalyzes the pyrophosphate-producing, inorganic phosphate-dependent dephosphorylation (phosphorolysis) of seryl-phosphorylated HPr (P-Ser-HPr). The sequence is that of HPr kinase/phosphorylase from Leptospira borgpetersenii serovar Hardjo-bovis (strain JB197).